A 48-amino-acid chain; its full sequence is Photosystem II reaction center protein K (48 aa).

Positions 1–11 (MFPSTNQEVLA) are excised as a propeptide. A helical transmembrane segment spans residues 23–43 (IVDVLPIIPLLFLLLAFVWQA).

Belongs to the PsbK family. As to quaternary structure, PSII is composed of 1 copy each of membrane proteins PsbA, PsbB, PsbC, PsbD, PsbE, PsbF, PsbH, PsbI, PsbJ, PsbK, PsbL, PsbM, PsbT, PsbY, PsbZ, Psb30/Ycf12, at least 3 peripheral proteins of the oxygen-evolving complex and a large number of cofactors. It forms dimeric complexes.

Its subcellular location is the plastid. The protein localises to the chloroplast thylakoid membrane. Its function is as follows. One of the components of the core complex of photosystem II (PSII). PSII is a light-driven water:plastoquinone oxidoreductase that uses light energy to abstract electrons from H(2)O, generating O(2) and a proton gradient subsequently used for ATP formation. It consists of a core antenna complex that captures photons, and an electron transfer chain that converts photonic excitation into a charge separation. In Euglena sanguinea, this protein is Photosystem II reaction center protein K.